A 297-amino-acid chain; its full sequence is Large ribosomal subunit protein uL18 (297 aa).

Gly2 carries the post-translational modification N-acetylglycine. N6-acetyllysine occurs at positions 5 and 48. Phosphoserine is present on Ser185. Position 220 is an N6-acetyllysine; alternate (Lys220). Lys220 is covalently cross-linked (Glycyl lysine isopeptide (Lys-Gly) (interchain with G-Cter in SUMO1); alternate). Lys220 participates in a covalent cross-link: Glycyl lysine isopeptide (Lys-Gly) (interchain with G-Cter in SUMO2); alternate. Thr232 carries the phosphothreonine modification. Residues 253–297 (YEKKPKREVKKKRWNRPKMSLAQKKDRVAQKKASFLRAQERAAES) form a disordered region. Positions 258-268 (KREVKKKRWNR) are enriched in basic residues. The residue at position 272 (Ser272) is a Phosphoserine.

The protein belongs to the universal ribosomal protein uL18 family. As to quaternary structure, component of the large ribosomal subunit (LSU). Part of the 5S RNP complex, which is a LSU subcomplex composed of the 5S RNA, RPL5 and RPL11. Component of a hexameric 5S RNP precursor complex, composed of 5S RNA, RRS1, RPF2/BXDC1, RPL5, RPL11 and HEATR3; this complex acts as a precursor for ribosome assembly. Interacts with NVL in an ATP-dependent manner. Interacts with RRP1B. Interacts with IPO5, IPO7 and KPNB1; these interactions may be involved in RPL5 nuclear import for the assembly of ribosomal subunits. Interacts with RRP1B.

The protein localises to the cytoplasm. Its subcellular location is the nucleus. It is found in the nucleolus. Functionally, component of the ribosome, a large ribonucleoprotein complex responsible for the synthesis of proteins in the cell. The small ribosomal subunit (SSU) binds messenger RNAs (mRNAs) and translates the encoded message by selecting cognate aminoacyl-transfer RNA (tRNA) molecules. The large subunit (LSU) contains the ribosomal catalytic site termed the peptidyl transferase center (PTC), which catalyzes the formation of peptide bonds, thereby polymerizing the amino acids delivered by tRNAs into a polypeptide chain. The nascent polypeptides leave the ribosome through a tunnel in the LSU and interact with protein factors that function in enzymatic processing, targeting, and the membrane insertion of nascent chains at the exit of the ribosomal tunnel. As part of the 5S RNP/5S ribonucleoprotein particle it is an essential component of the LSU, required for its formation and the maturation of rRNAs. It also couples ribosome biogenesis to p53/TP53 activation. As part of the 5S RNP it accumulates in the nucleoplasm and inhibits MDM2, when ribosome biogenesis is perturbed, mediating the stabilization and the activation of TP53. The sequence is that of Large ribosomal subunit protein uL18 (Rpl5) from Rattus norvegicus (Rat).